Here is a 690-residue protein sequence, read N- to C-terminus: Methionine--tRNA ligase 1 (690 aa).

The 'HIGH' region signature appears at 11-21 (PYANGHIHIGH). The Zn(2+) site is built by Cys142, Cys145, Cys155, and Cys158. The 'KMSKS' region motif lies at 328 to 332 (KMSKS). ATP is bound at residue Lys331. The 101-residue stretch at 590–690 (DFSKVDLRVA…SGAKPGMRVH (101 aa)) folds into the tRNA-binding domain.

The protein belongs to the class-I aminoacyl-tRNA synthetase family. MetG type 1 subfamily. Homodimer. It depends on Zn(2+) as a cofactor.

It localises to the cytoplasm. It carries out the reaction tRNA(Met) + L-methionine + ATP = L-methionyl-tRNA(Met) + AMP + diphosphate. Its function is as follows. Is required not only for elongation of protein synthesis but also for the initiation of all mRNA translation through initiator tRNA(fMet) aminoacylation. The chain is Methionine--tRNA ligase 1 from Sorangium cellulosum (strain So ce56) (Polyangium cellulosum (strain So ce56)).